The sequence spans 253 residues: LexA repressor (253 aa).

The segment at 1–33 (MTSQGRGTRRGGARGNVRAFPENPADAAGLTPR) is disordered. Residues 54-74 (VREIGEAVGLTSTSSVAHQLK) constitute a DNA-binding region (H-T-H motif). Catalysis depends on for autocatalytic cleavage activity residues Ser177 and Lys214.

The protein belongs to the peptidase S24 family. As to quaternary structure, homodimer.

It carries out the reaction Hydrolysis of Ala-|-Gly bond in repressor LexA.. Functionally, represses a number of genes involved in the response to DNA damage (SOS response), including recA and lexA. In the presence of single-stranded DNA, RecA interacts with LexA causing an autocatalytic cleavage which disrupts the DNA-binding part of LexA, leading to derepression of the SOS regulon and eventually DNA repair. The protein is LexA repressor of Frankia alni (strain DSM 45986 / CECT 9034 / ACN14a).